A 576-amino-acid chain; its full sequence is Interleukin-1 receptor type 1 (576 aa).

The signal sequence occupies residues 1–19 (MENMKVLLGLICLMVPLLS). The Extracellular portion of the chain corresponds to 20 to 338 (LEIDVCTEYP…QLIYPVPDFK (319 aa)). Cystine bridges form between Cys-25–Cys-107, Cys-46–Cys-99, and Cys-145–Cys-199. 3 Ig-like C2-type domains span residues 25–115 (CTEY…VTVT), 121–213 (PGLC…YPVT), and 229–329 (PVIL…AHVQ). 7 N-linked (GlcNAc...) asparagine glycosylation sites follow: Asn-63, Asn-103, Asn-174, Asn-236, Asn-252, Asn-266, and Asn-300. An intrachain disulfide couples Cys-251 to Cys-315. Residues 339-359 (NYLIGGFIILTATIVCCVCIY) form a helical membrane-spanning segment. Residues 360-576 (KVFKVDIVLW…LPAATHLPLG (217 aa)) lie on the Cytoplasmic side of the membrane. The region spanning 386 to 541 (KTYDAYILYP…RFWKNLRYQM (156 aa)) is the TIR domain. Glu-473 is a catalytic residue. Residue Tyr-499 is modified to Phosphotyrosine. The residue at position 556 (Thr-556) is a Phosphothreonine; by PKC.

The protein belongs to the interleukin-1 receptor family. In terms of assembly, the interleukin-1 receptor complex is a heterodimer of IL1R1 and IL1RAP. Interacts with PIK3R1. Interacts with IL1A. Post-translationally, a soluble form (sIL1R1) is probably produced by proteolytic cleavage at the cell surface (shedding). Rapidly phosphorylated on Tyr-499 in response to IL-1, which creates a SH2 binding site for the PI 3-kinase regulatory subunit PIK3R1. As to expression, isoform 2 is expressed in various brain tissues.

Its subcellular location is the membrane. The protein localises to the cell membrane. It localises to the secreted. The catalysed reaction is NAD(+) + H2O = ADP-D-ribose + nicotinamide + H(+). Its function is as follows. Receptor for IL1A, IL1B and IL1RN. After binding to interleukin-1 associates with the coreceptor IL1RAP to form the high affinity interleukin-1 receptor complex which mediates interleukin-1-dependent activation of NF-kappa-B, MAPK and other pathways. Signaling involves the recruitment of adapter molecules such as TOLLIP, MYD88, and IRAK1 or IRAK2 via the respective TIR domains of the receptor/coreceptor subunits. Binds ligands with comparable affinity and binding of antagonist IL1RN prevents association with IL1RAP to form a signaling complex. Involved in IL1B-mediated costimulation of IFNG production from T-helper 1 (Th1) cells. Unable to mediate canonical IL-1 signaling. Cooperates with IL1RAP isoform 3 to mediate IL1B-induced neuronal activity including IL1B-potentiated NMDA-induced calcium influx mediated by Akt kinase activation. This chain is Interleukin-1 receptor type 1 (Il1r1), found in Mus musculus (Mouse).